A 374-amino-acid chain; its full sequence is DNA integrity scanning protein DisA (374 aa).

In terms of domain architecture, DAC spans D20–S158. Residues G87, L105, and T118 to T122 contribute to the ATP site.

The protein belongs to the DisA family. In terms of assembly, homooctamer. Mg(2+) is required as a cofactor.

It catalyses the reaction 2 ATP = 3',3'-c-di-AMP + 2 diphosphate. In terms of biological role, participates in a DNA-damage check-point that is active prior to asymmetric division when DNA is damaged. DisA forms globular foci that rapidly scan along the chromosomes during sporulation, searching for lesions. When a lesion is present, DisA pauses at the lesion site. This triggers a cellular response that culminates in a temporary block in sporulation initiation. Its function is as follows. Also has diadenylate cyclase activity, catalyzing the condensation of 2 ATP molecules into cyclic di-AMP (c-di-AMP). c-di-AMP acts as a signaling molecule that couples DNA integrity with progression of sporulation. The rise in c-di-AMP level generated by DisA while scanning the chromosome, operates as a positive signal that advances sporulation; upon encountering a lesion, the DisA focus arrests at the damaged site and halts c-di-AMP synthesis. This chain is DNA integrity scanning protein DisA, found in Streptomyces avermitilis (strain ATCC 31267 / DSM 46492 / JCM 5070 / NBRC 14893 / NCIMB 12804 / NRRL 8165 / MA-4680).